The chain runs to 206 residues: CASP-like protein 2C1 (206 aa).

The Cytoplasmic segment spans residues 1–31 (MSVLGVGPRTVTPHLRKGMMESSSGISLARA). The chain crosses the membrane as a helical span at residues 32–52 (EAFLRLFAILVLVLTACLLGF). The Extracellular segment spans residues 53-71 (DTQTKLLFSTIKKTATFRD). The helical transmembrane segment at 72 to 92 (LGALQVVVYVDSVAAGYNLLQ) threads the bilayer. The Cytoplasmic portion of the chain corresponds to 93–111 (LGRGFISAKLKGKLINVSY). The helical transmembrane segment at 112–132 (VTLPWVCFLLDQAAVYTVFSA) threads the bilayer. Over 133-161 (NTAALQASIIAVTGESSLQWMKVCNRYTR) the chain is Extracellular. A helical transmembrane segment spans residues 162–182 (FCIQVGGALLSGYLASLLMVL). Topologically, residues 183-206 (LSSLSAFSLFRLYSPKQFHLLKPT) are cytoplasmic.

The protein belongs to the Casparian strip membrane proteins (CASP) family. As to quaternary structure, homodimer and heterodimers.

Its subcellular location is the cell membrane. This is CASP-like protein 2C1 from Vitis vinifera (Grape).